Reading from the N-terminus, the 257-residue chain is Ditrans,polycis-undecaprenyl-diphosphate synthase ((2E,6E)-farnesyl-diphosphate specific) (257 aa).

The active site involves aspartate 34. Aspartate 34 contacts Mg(2+). Residues 35–38 (GNGR), tryptophan 39, arginine 47, and histidine 51 each bind substrate. Residue asparagine 82 is the Proton acceptor of the active site. Substrate-binding positions include tryptophan 83, arginine 85, arginine 201, and 207–209 (RLS). Position 220 (glutamate 220) interacts with Mg(2+).

The protein belongs to the UPP synthase family. As to quaternary structure, homodimer. It depends on Mg(2+) as a cofactor.

The enzyme catalyses 8 isopentenyl diphosphate + (2E,6E)-farnesyl diphosphate = di-trans,octa-cis-undecaprenyl diphosphate + 8 diphosphate. Its function is as follows. Catalyzes the sequential condensation of isopentenyl diphosphate (IPP) with (2E,6E)-farnesyl diphosphate (E,E-FPP) to yield (2Z,6Z,10Z,14Z,18Z,22Z,26Z,30Z,34E,38E)-undecaprenyl diphosphate (di-trans,octa-cis-UPP). UPP is the precursor of glycosyl carrier lipid in the biosynthesis of bacterial cell wall polysaccharide components such as peptidoglycan and lipopolysaccharide. The protein is Ditrans,polycis-undecaprenyl-diphosphate synthase ((2E,6E)-farnesyl-diphosphate specific) of Francisella tularensis subsp. tularensis (strain SCHU S4 / Schu 4).